Consider the following 501-residue polypeptide: Glutamyl-tRNA(Gln) amidotransferase subunit A (501 aa).

Active-site charge relay system residues include Lys80 and Ser155. The active-site Acyl-ester intermediate is the Ser179.

Belongs to the amidase family. GatA subfamily. In terms of assembly, heterotrimer of A, B and C subunits.

It carries out the reaction L-glutamyl-tRNA(Gln) + L-glutamine + ATP + H2O = L-glutaminyl-tRNA(Gln) + L-glutamate + ADP + phosphate + H(+). Functionally, allows the formation of correctly charged Gln-tRNA(Gln) through the transamidation of misacylated Glu-tRNA(Gln) in organisms which lack glutaminyl-tRNA synthetase. The reaction takes place in the presence of glutamine and ATP through an activated gamma-phospho-Glu-tRNA(Gln). This Cupriavidus pinatubonensis (strain JMP 134 / LMG 1197) (Cupriavidus necator (strain JMP 134)) protein is Glutamyl-tRNA(Gln) amidotransferase subunit A.